A 984-amino-acid chain; its full sequence is Putative formate dehydrogenase SH0748 (984 aa).

The 2Fe-2S ferredoxin-type domain occupies 3–79 (EHLIVTLDGT…PMTVNTQNND (77 aa)). [2Fe-2S] cluster contacts are provided by Cys37, Cys48, Cys51, and Cys63. Positions 79-119 (DVKASQKEALDRILEKHMLYCTVCDYNNGDCEIHNAMDAWG) constitute a 4Fe-4S His(Cys)3-ligated-type domain. The [4Fe-4S] cluster site is built by His95, Cys99, Cys102, Cys109, Cys147, Cys150, Cys153, Cys157, Cys190, Cys193, Cys196, Cys200, Cys264, Cys267, Cys271, and Cys299. 2 4Fe-4S ferredoxin-type domains span residues 138–165 (PFYR…VNET) and 181–211 (NDVP…VNME). Positions 252-984 (MRKERIKKTK…YVFPGNVVDK (733 aa)) are formate dehydrogenase. Residues 257 to 313 (IKKTKTVCTYCGVGCSFDVWTKDREVLKVQPSHDSPANKIATCVKGKFSWGHINSDQ) enclose the 4Fe-4S Mo/W bis-MGD-type domain.

In the C-terminal section; belongs to the prokaryotic molybdopterin-containing oxidoreductase family. [2Fe-2S] cluster serves as cofactor. Requires [4Fe-4S] cluster as cofactor. The cofactor is Mo-bis(molybdopterin guanine dinucleotide).

It catalyses the reaction formate + NAD(+) = CO2 + NADH. The polypeptide is Putative formate dehydrogenase SH0748 (Staphylococcus haemolyticus (strain JCSC1435)).